The sequence spans 60 residues: MSEVKVRDNESLESALKRFKRSCAKAGVLSEVRKREHYEKPSVKRKKKSEAARRRKSKVR.

The disordered stretch occupies residues 35–60 (REHYEKPSVKRKKKSEAARRRKSKVR). Residues 43–60 (VKRKKKSEAARRRKSKVR) are compositionally biased toward basic residues.

Belongs to the bacterial ribosomal protein bS21 family.

In Clostridium novyi (strain NT), this protein is Small ribosomal subunit protein bS21.